Consider the following 182-residue polypeptide: Triplatin (182 aa).

The signal sequence occupies residues 1–18; the sequence is MKMIIAVTFLGIVTIAFA. Disulfide bonds link Cys-21–Cys-133, Cys-55–Cys-177, and Cys-88–Cys-105.

Belongs to the calycin superfamily. Triabin family. Expressed in salivary glands.

Its subcellular location is the secreted. Its function is as follows. Inhibits platelet aggregation and vasoconstriction through binding to distinct eicosanoids involved in inflammation (acts as a scavenger), and has a role in inhibiting host innate immunity by impairing platelet-assisted formation of neutrophil extracellular traps (NETs). Inhibits platelet aggregation by collagen, and low doses of thromboxane A2 mimetic (TXA2 mimetic), and arachidonic acid (AA) without affecting aggregation induced by ADP, convulxin (GP6 agonist), and PMA. Binds to TXA2, TXB2, prostaglandine H2 mimetic (PGH2 mimetic), PGJ2, and PGF2alpha. Binding is not observed to leukotrienes, AA, and biogenic amines (PGE1, 5(S)-HETE, 12(S)-HETE, 20-HETE, norepinephrine, epinephrine, serotonin, LTC4 and ADP). Induces relaxation of aorta rat previously contracted with TXA2 mimetic. Moreover, it also impairs platelet-assisted formation of neutrophil extracellular traps (NETs). NETs are web-like structures of DNA and proteins that play an important role in killing of pathogens. In addition, NETs are implicated in thrombus formation. In vivo, this protein exhibits antithrombotic activity in two distinct mice models that are highly dependent on platelets. It is noteworthy that it inhibits thrombosis without promoting excessive bleeding. In Triatoma infestans (Assassin bug), this protein is Triplatin.